A 749-amino-acid chain; its full sequence is Transcription factor RFX3 (749 aa).

Residues 183-258 (HLQWLLDNYE…YHYYGIRVKP (76 aa)) constitute a DNA-binding region (RFX-type winged-helix).

This sequence belongs to the RFX family.

It localises to the nucleus. In terms of biological role, transcription factor required for ciliogenesis and islet cell differentiation during endocrine pancreas development. The chain is Transcription factor RFX3 (rfx3) from Xenopus tropicalis (Western clawed frog).